The primary structure comprises 260 residues: HLA class II histocompatibility antigen, DP alpha 1 chain (260 aa).

An N-terminal signal peptide occupies residues 1 to 28 (MRPEDRMFHIRAVILRALSLAFLLSLRG). Residues 29 to 115 (AGAIKADHVS…QRSNHTQATN (87 aa)) are alpha-1. Topologically, residues 29-222 (AGAIKADHVS…EPIQMPETTE (194 aa)) are extracellular. Asn-109 and Asn-149 each carry an N-linked (GlcNAc...) asparagine glycan. The interval 116–209 (DPPEVTVFPK…GLDQPLLKHW (94 aa)) is alpha-2. The Ig-like C1-type domain occupies 118-210 (PEVTVFPKEP…LDQPLLKHWE (93 aa)). An intrachain disulfide couples Cys-138 to Cys-194. Positions 210-222 (EAQEPIQMPETTE) are connecting peptide. Residues 223 to 245 (TVLCALGLVLGLVGIIVGTVLII) form a helical membrane-spanning segment. At 246-260 (KSLRSGHDPRAQGTL) the chain is on the cytoplasmic side.

Belongs to the MHC class II family. Heterodimer of an alpha and a beta subunit; also referred as MHC class II molecule. In the endoplasmic reticulum (ER) it forms a heterononamer; 3 MHC class II molecules bind to a CD74 homotrimer (also known as invariant chain or HLA class II histocompatibility antigen gamma chain). In the endosomal/lysosomal system; CD74 undergoes sequential degradation by various proteases; leaving a small fragment termed CLIP on each MHC class II molecule. MHC class II molecule interacts with HLA_DM, and HLA_DO in B-cells, in order to release CLIP and facilitate the binding of antigenic peptides.

It is found in the cell membrane. The protein resides in the endoplasmic reticulum membrane. It localises to the golgi apparatus. The protein localises to the trans-Golgi network membrane. Its subcellular location is the endosome membrane. It is found in the lysosome membrane. Its function is as follows. Binds peptides derived from antigens that access the endocytic route of antigen presenting cells (APC) and presents them on the cell surface for recognition by the CD4 T-cells. The peptide binding cleft accommodates peptides of 10-30 residues. The peptides presented by MHC class II molecules are generated mostly by degradation of proteins that access the endocytic route, where they are processed by lysosomal proteases and other hydrolases. Exogenous antigens that have been endocytosed by the APC are thus readily available for presentation via MHC II molecules, and for this reason this antigen presentation pathway is usually referred to as exogenous. As membrane proteins on their way to degradation in lysosomes as part of their normal turn-over are also contained in the endosomal/lysosomal compartments, exogenous antigens must compete with those derived from endogenous components. Autophagy is also a source of endogenous peptides, autophagosomes constitutively fuse with MHC class II loading compartments. In addition to APCs, other cells of the gastrointestinal tract, such as epithelial cells, express MHC class II molecules and CD74 and act as APCs, which is an unusual trait of the GI tract. To produce a MHC class II molecule that presents an antigen, three MHC class II molecules (heterodimers of an alpha and a beta chain) associate with a CD74 trimer in the ER to form a heterononamer. Soon after the entry of this complex into the endosomal/lysosomal system where antigen processing occurs, CD74 undergoes a sequential degradation by various proteases, including CTSS and CTSL, leaving a small fragment termed CLIP (class-II-associated invariant chain peptide). The removal of CLIP is facilitated by HLA-DM via direct binding to the alpha-beta-CLIP complex so that CLIP is released. HLA-DM stabilizes MHC class II molecules until primary high affinity antigenic peptides are bound. The MHC II molecule bound to a peptide is then transported to the cell membrane surface. In B-cells, the interaction between HLA-DM and MHC class II molecules is regulated by HLA-DO. Primary dendritic cells (DCs) also to express HLA-DO. Lysosomal microenvironment has been implicated in the regulation of antigen loading into MHC II molecules, increased acidification produces increased proteolysis and efficient peptide loading. The protein is HLA class II histocompatibility antigen, DP alpha 1 chain (HLA-DPA1) of Homo sapiens (Human).